Consider the following 402-residue polypeptide: Pyridinium-3,5-bisthiocarboxylic acid mononucleotide nickel insertion protein (402 aa).

The protein belongs to the LarC family.

The enzyme catalyses Ni(II)-pyridinium-3,5-bisthiocarboxylate mononucleotide = pyridinium-3,5-bisthiocarboxylate mononucleotide + Ni(2+). In terms of biological role, involved in the biosynthesis of a nickel-pincer cofactor ((SCS)Ni(II) pincer complex). Binds Ni(2+), and functions in nickel delivery to pyridinium-3,5-bisthiocarboxylic acid mononucleotide (P2TMN), to form the mature cofactor. Is thus probably required for the activation of nickel-pincer cofactor-dependent enzymes. The protein is Pyridinium-3,5-bisthiocarboxylic acid mononucleotide nickel insertion protein of Thermotoga sp. (strain RQ2).